The sequence spans 217 residues: D-glycero-beta-D-manno-heptose-1,7-bisphosphate 7-phosphatase (217 aa).

Catalysis depends on Asp-36, which acts as the Nucleophile. Mg(2+) contacts are provided by Asp-36 and Asp-38. Substrate contacts are provided by residues Asp-36 to Asp-38, Asp-44 to Tyr-47, Thr-78 to Ser-81, and Arg-135 to Lys-136. The active-site Proton donor is Asp-38. Asp-161 and Lys-162 together coordinate Mg(2+). Lys-162 provides a ligand contact to substrate.

Belongs to the gmhB family. In terms of assembly, monomer. Mg(2+) serves as cofactor.

The protein resides in the cytoplasm. The enzyme catalyses D-glycero-beta-D-manno-heptose 1,7-bisphosphate + H2O = D-glycero-beta-D-manno-heptose 1-phosphate + phosphate. The protein operates within nucleotide-sugar biosynthesis; ADP-L-glycero-beta-D-manno-heptose biosynthesis; ADP-L-glycero-beta-D-manno-heptose from D-glycero-beta-D-manno-heptose 7-phosphate: step 2/4. In terms of biological role, converts the D-glycero-beta-D-manno-heptose 1,7-bisphosphate (beta-HBP) intermediate into D-glycero-beta-D-manno-heptose 1-phosphate by removing the phosphate group at the C-7 position. The chain is D-glycero-beta-D-manno-heptose-1,7-bisphosphate 7-phosphatase (gmhB) from Mesorhizobium japonicum (strain LMG 29417 / CECT 9101 / MAFF 303099) (Mesorhizobium loti (strain MAFF 303099)).